The following is a 166-amino-acid chain: Co-chaperone protein HscB homolog (166 aa).

One can recognise a J domain in the interval 3–75 (QYFTLFRIEP…IDRAAYLLKT (73 aa)).

This sequence belongs to the HscB family. Interacts with HscA and stimulates its ATPase activity.

Functionally, co-chaperone involved in the maturation of iron-sulfur cluster-containing proteins. Seems to help targeting proteins to be folded toward HscA. The sequence is that of Co-chaperone protein HscB homolog from Neisseria meningitidis serogroup A / serotype 4A (strain DSM 15465 / Z2491).